Here is a 150-residue protein sequence, read N- to C-terminus: Large ribosomal subunit protein uL22c (150 aa).

Belongs to the universal ribosomal protein uL22 family. As to quaternary structure, part of the 50S ribosomal subunit.

Its subcellular location is the plastid. The protein resides in the chloroplast. Its function is as follows. This protein binds specifically to 23S rRNA. The globular domain of the protein is located near the polypeptide exit tunnel on the outside of the subunit, while an extended beta-hairpin is found that lines the wall of the exit tunnel in the center of the 70S ribosome. The protein is Large ribosomal subunit protein uL22c (rpl22) of Fagopyrum esculentum subsp. ancestrale (Wild buckwheat).